The primary structure comprises 694 residues: DNA-directed RNA polymerase subunit beta' (694 aa).

Zn(2+) is bound by residues cysteine 69, cysteine 71, cysteine 87, and cysteine 90. Mg(2+) is bound by residues aspartate 489, aspartate 491, and aspartate 493.

Belongs to the RNA polymerase beta' chain family. RpoC1 subfamily. In terms of assembly, in plastids the minimal PEP RNA polymerase catalytic core is composed of four subunits: alpha, beta, beta', and beta''. When a (nuclear-encoded) sigma factor is associated with the core the holoenzyme is formed, which can initiate transcription. Requires Mg(2+) as cofactor. It depends on Zn(2+) as a cofactor.

Its subcellular location is the plastid. The protein resides in the chloroplast. The enzyme catalyses RNA(n) + a ribonucleoside 5'-triphosphate = RNA(n+1) + diphosphate. In terms of biological role, DNA-dependent RNA polymerase catalyzes the transcription of DNA into RNA using the four ribonucleoside triphosphates as substrates. The protein is DNA-directed RNA polymerase subunit beta' of Gossypium barbadense (Sea Island cotton).